Consider the following 194-residue polypeptide: Putative 3-methyladenine DNA glycosylase (194 aa).

This sequence belongs to the DNA glycosylase MPG family.

This Mycolicibacterium fortuitum (Mycobacterium fortuitum) protein is Putative 3-methyladenine DNA glycosylase.